Consider the following 261-residue polypeptide: Thioesterase AMT4 (261 aa).

The protein belongs to the AMT4 thioesterase family.

The protein operates within mycotoxin biosynthesis. Thioesterase; part of the gene clusters that mediate the biosynthesis of AM-toxins, host-selective toxins (HSTs) causing Alternaria blotch on apple, a worldwide distributed disease. AM-toxins are cyclic depsipeptides containing the 3 residues 2-hydroxy-isovaleric acid (2-HIV), dehydroalanine, L-alanine which are common for all 3 AM-toxins I to III. The fourth precursor is L-alpha-amino-methoxyphenyl-valeric acid (L-Amv) for AM-toxin I, L-alpha-amino-phenyl-valeric acid (L-Apv) for AM-toxin II, and L-alpha-amino-hydroxyphenyl-valeric acid (L-Ahv) for AM-toxin III. AM-toxins have two target sites for affecting susceptible apple cells; they cause invagination of the plasma membrane and electrolyte loss and chloroplast disorganization. The non-ribosomal peptide synthetase AMT1 contains 4 catalytic modules and is responsible for activation of each residue in AM-toxin. The aldo-keto reductase AMT2 catalyzes the conversion of 2-keto-isovaleric acid (2-KIV) to 2-hydroxy-isovaleric acid (2-HIV), one of the precursor residues incorporated by AMT1 during AM-toxin biosynthesis, by reduction of its ketone to an alcohol. The cytochrome P450 monooxygenase AMT3 and the thioesterase AMT4 are also important for AM-toxin production, but their exact function within the AM-toxin biosynthesis are not known yet. Up to 21 proteins (including AMT1 to AMT4) are predicted to be involved in AM-toxin biosynthesis since their expression ishighly up-regulated in AM-toxin-producing cultures. The sequence is that of Thioesterase AMT4 from Alternaria alternata (Alternaria rot fungus).